We begin with the raw amino-acid sequence, 78 residues long: Apolipoprotein C-I (78 aa).

Positions 1–26 (MRLILWLPVLVVVLLMVTEGPAPAQG) are cleaved as a signal peptide.

The protein belongs to the apolipoprotein C1 family.

Its subcellular location is the secreted. Functionally, inhibitor of lipoprotein binding to the low density lipoprotein (LDL) receptor, LDL receptor-related protein, and very low density lipoprotein (VLDL) receptor. Associates with high density lipoproteins (HDL) and the triacylglycerol-rich lipoproteins in the plasma and makes up about 10% of the protein of the VLDL and 2% of that of HDL. Appears to interfere directly with fatty acid uptake and is also the major plasma inhibitor of cholesteryl ester transfer protein (CETP). Binds free fatty acids and reduces their intracellular esterification. Modulates the interaction of APOE with beta-migrating VLDL and inhibits binding of beta-VLDL to the LDL receptor-related protein. This Panthera tigris altaica (Siberian tiger) protein is Apolipoprotein C-I (APOC1).